Reading from the N-terminus, the 306-residue chain is Homoserine O-acetyltransferase (306 aa).

Cysteine 142 (acyl-thioester intermediate) is an active-site residue. Lysine 163 and serine 192 together coordinate substrate. The active-site Proton acceptor is histidine 235. Glutamate 237 is an active-site residue. Arginine 249 provides a ligand contact to substrate.

It belongs to the MetA family.

The protein resides in the cytoplasm. The catalysed reaction is L-homoserine + acetyl-CoA = O-acetyl-L-homoserine + CoA. The protein operates within amino-acid biosynthesis; L-methionine biosynthesis via de novo pathway; O-acetyl-L-homoserine from L-homoserine: step 1/1. Its function is as follows. Transfers an acetyl group from acetyl-CoA to L-homoserine, forming acetyl-L-homoserine. The chain is Homoserine O-acetyltransferase from Brevibacillus brevis (strain 47 / JCM 6285 / NBRC 100599).